We begin with the raw amino-acid sequence, 317 residues long: Probable arabinan endo-1,5-alpha-L-arabinosidase C (317 aa).

The signal sequence occupies residues 1–17; that stretch reads MLSFLAALSLPLALVNA. Aspartate 32 (proton acceptor) is an active-site residue. Asparagine 190 carries N-linked (GlcNAc...) asparagine glycosylation. The active-site Proton donor is glutamate 198.

This sequence belongs to the glycosyl hydrolase 43 family.

The protein resides in the secreted. The catalysed reaction is Endohydrolysis of (1-&gt;5)-alpha-arabinofuranosidic linkages in (1-&gt;5)-arabinans.. The protein operates within glycan metabolism; L-arabinan degradation. Endo-1,5-alpha-L-arabinanase involved in degradation of pectin. Its preferred substrate is linear 1,5-alpha-L-arabinan. The polypeptide is Probable arabinan endo-1,5-alpha-L-arabinosidase C (abnC) (Aspergillus flavus (strain ATCC 200026 / FGSC A1120 / IAM 13836 / NRRL 3357 / JCM 12722 / SRRC 167)).